Consider the following 258-residue polypeptide: UPF0246 protein YaaA (258 aa).

The protein belongs to the UPF0246 family.

This Escherichia coli (strain SMS-3-5 / SECEC) protein is UPF0246 protein YaaA.